A 255-amino-acid polypeptide reads, in one-letter code: 5-oxoprolinase subunit A (255 aa).

It belongs to the LamB/PxpA family. Forms a complex composed of PxpA, PxpB and PxpC.

It catalyses the reaction 5-oxo-L-proline + ATP + 2 H2O = L-glutamate + ADP + phosphate + H(+). In terms of biological role, catalyzes the cleavage of 5-oxoproline to form L-glutamate coupled to the hydrolysis of ATP to ADP and inorganic phosphate. This chain is 5-oxoprolinase subunit A, found in Nitrobacter winogradskyi (strain ATCC 25391 / DSM 10237 / CIP 104748 / NCIMB 11846 / Nb-255).